The following is a 576-amino-acid chain: Putative export ATP-binding/permease protein RC1073 (576 aa).

An ABC transmembrane type-1 domain is found at 20–303 (LIIVMISLLS…IFELLSEMHL (284 aa)). A run of 6 helical transmembrane segments spans residues 21-41 (IIVMISLLSVSASLLLIGSVF), 57-77 (VDNSILYICLLIIILSIASFF), 135-155 (FLSFFIRNSVMLIGSITLMFF), 158-178 (FKLASIVIITIPILLIPLIKF), 242-262 (ALFFAISIAVIFLAITLVVWI), and 277-297 (IISFIYYAIIAGVSCGGIFEL). Positions 336–572 (IEFKNVDFTY…SEIYRNICRE (237 aa)) constitute an ABC transporter domain. Residue 371–378 (GRSGAGKS) coordinates ATP.

Belongs to the ABC transporter superfamily. Homodimer.

Its subcellular location is the cell inner membrane. Part of an ABC transporter complex. Transmembrane domains (TMD) form a pore in the inner membrane and the ATP-binding domain (NBD) is responsible for energy generation. This is Putative export ATP-binding/permease protein RC1073 from Rickettsia conorii (strain ATCC VR-613 / Malish 7).